Here is a 196-residue protein sequence, read N- to C-terminus: 7-methyl-GTP pyrophosphatase (196 aa).

The active-site Proton acceptor is Asp72.

This sequence belongs to the Maf family. YceF subfamily. Requires a divalent metal cation as cofactor.

The protein resides in the cytoplasm. It carries out the reaction N(7)-methyl-GTP + H2O = N(7)-methyl-GMP + diphosphate + H(+). Nucleoside triphosphate pyrophosphatase that hydrolyzes 7-methyl-GTP (m(7)GTP). May have a dual role in cell division arrest and in preventing the incorporation of modified nucleotides into cellular nucleic acids. This chain is 7-methyl-GTP pyrophosphatase, found in Neisseria meningitidis serogroup B (strain ATCC BAA-335 / MC58).